Reading from the N-terminus, the 88-residue chain is Large ribosomal subunit protein bL27 (88 aa).

The disordered stretch occupies residues 1 to 22 (MAHKKGASSSRNGRDSNAQRLG). Polar residues predominate over residues 7–19 (ASSSRNGRDSNAQ).

Belongs to the bacterial ribosomal protein bL27 family.

This Mycolicibacterium gilvum (strain PYR-GCK) (Mycobacterium gilvum (strain PYR-GCK)) protein is Large ribosomal subunit protein bL27.